The following is a 265-amino-acid chain: Arcelin-1 (265 aa).

The N-terminal stretch at 1–21 (MASSNLLTLALFLVLLTHANS) is a signal peptide. Asn33, Asn89, and Asn128 each carry an N-linked (GlcNAc...) asparagine glycan. Cys165 and Cys201 form a disulfide bridge.

This sequence belongs to the leguminous lectin family. As to quaternary structure, homodimer.

Functionally, seed storage. This carbohydrate-binding lectin has toxic effects on an important bean bruchid pest, Z.subfasciatus. Antibiosis properties of legume lectins are proposed to be due to the lysis of epithelial cells of the intestine by binding to the carbohydrate moieties of these proteins. This is Arcelin-1 (ARC1) from Phaseolus vulgaris (Kidney bean).